The primary structure comprises 189 residues: Crossover junction endodeoxyribonuclease RuvC (189 aa).

Active-site residues include aspartate 12, glutamate 72, and aspartate 147. Residues aspartate 12, glutamate 72, and aspartate 147 each contribute to the Mg(2+) site.

Belongs to the RuvC family. Homodimer which binds Holliday junction (HJ) DNA. The HJ becomes 2-fold symmetrical on binding to RuvC with unstacked arms; it has a different conformation from HJ DNA in complex with RuvA. In the full resolvosome a probable DNA-RuvA(4)-RuvB(12)-RuvC(2) complex forms which resolves the HJ. Mg(2+) serves as cofactor.

The protein resides in the cytoplasm. The enzyme catalyses Endonucleolytic cleavage at a junction such as a reciprocal single-stranded crossover between two homologous DNA duplexes (Holliday junction).. Functionally, the RuvA-RuvB-RuvC complex processes Holliday junction (HJ) DNA during genetic recombination and DNA repair. Endonuclease that resolves HJ intermediates. Cleaves cruciform DNA by making single-stranded nicks across the HJ at symmetrical positions within the homologous arms, yielding a 5'-phosphate and a 3'-hydroxyl group; requires a central core of homology in the junction. The consensus cleavage sequence is 5'-(A/T)TT(C/G)-3'. Cleavage occurs on the 3'-side of the TT dinucleotide at the point of strand exchange. HJ branch migration catalyzed by RuvA-RuvB allows RuvC to scan DNA until it finds its consensus sequence, where it cleaves and resolves the cruciform DNA. This Porphyromonas gingivalis (strain ATCC BAA-308 / W83) protein is Crossover junction endodeoxyribonuclease RuvC.